We begin with the raw amino-acid sequence, 295 residues long: GTPase Era (295 aa).

Residues 3-170 (KSGFVTIVGR…VDLMKTELPE (168 aa)) form the Era-type G domain. Residues 11–18 (GRPNVGKS) form a G1 region. Residue 11–18 (GRPNVGKS) coordinates GTP. Residues 37 to 41 (QTTRN) are G2. The tract at residues 58-61 (DTPG) is G3. GTP-binding positions include 58–62 (DTPGI) and 120–123 (NKID). The G4 stretch occupies residues 120-123 (NKID). Residues 149–151 (IAA) form a G5 region. The region spanning 201 to 278 (LRDEVPHGIA…NVKIWVKVRK (78 aa)) is the KH type-2 domain.

Belongs to the TRAFAC class TrmE-Era-EngA-EngB-Septin-like GTPase superfamily. Era GTPase family. In terms of assembly, monomer.

It is found in the cytoplasm. Its subcellular location is the cell membrane. In terms of biological role, an essential GTPase that binds both GDP and GTP, with rapid nucleotide exchange. Plays a role in 16S rRNA processing and 30S ribosomal subunit biogenesis and possibly also in cell cycle regulation and energy metabolism. The chain is GTPase Era from Clostridium botulinum (strain Eklund 17B / Type B).